Reading from the N-terminus, the 435-residue chain is Probable exopolygalacturonase B (435 aa).

The N-terminal stretch at 1–15 is a signal peptide; sequence MKFFLATLFASAVSS. Asparagine 59, asparagine 184, and asparagine 224 each carry an N-linked (GlcNAc...) asparagine glycan. 5 PbH1 repeats span residues 208–239, 240–261, 262–283, 294–315, and 326–347; these read SKDV…DSLN, VDGL…SPKP, NTTN…SMGS, IEHA…RLKA, and INNI…VLDQ. Aspartate 254 serves as the catalytic Proton donor. A disulfide bond links cysteine 256 and cysteine 273. 2 N-linked (GlcNAc...) asparagine glycosylation sites follow: asparagine 262 and asparagine 274. The active site involves histidine 277. N-linked (GlcNAc...) asparagine glycans are attached at residues asparagine 301, asparagine 328, asparagine 365, and asparagine 373. One copy of the PbH1 6 repeat lies at 366-388; the sequence is VTNILFENISGTSSGKNGKVVAD. Residues cysteine 391 and cysteine 397 are joined by a disulfide bond. N-linked (GlcNAc...) asparagine glycosylation occurs at asparagine 406.

The protein belongs to the glycosyl hydrolase 28 family.

It is found in the secreted. The enzyme catalyses [(1-&gt;4)-alpha-D-galacturonosyl](n) + H2O = alpha-D-galacturonate + [(1-&gt;4)-alpha-D-galacturonosyl](n-1). In terms of biological role, specific in hydrolyzing the terminal glycosidic bond of polygalacturonic acid and oligogalacturonates. This Aspergillus flavus (strain ATCC 200026 / FGSC A1120 / IAM 13836 / NRRL 3357 / JCM 12722 / SRRC 167) protein is Probable exopolygalacturonase B (pgxB).